The sequence spans 277 residues: Sulfur carrier protein FdhD (277 aa).

The active-site Cysteine persulfide intermediate is cysteine 123.

Belongs to the FdhD family.

The protein resides in the cytoplasm. Required for formate dehydrogenase (FDH) activity. Acts as a sulfur carrier protein that transfers sulfur from IscS to the molybdenum cofactor prior to its insertion into FDH. The chain is Sulfur carrier protein FdhD from Pectobacterium atrosepticum (strain SCRI 1043 / ATCC BAA-672) (Erwinia carotovora subsp. atroseptica).